Consider the following 125-residue polypeptide: Holo-[acyl-carrier-protein] synthase (125 aa).

Residues Asp-8 and Glu-57 each contribute to the Mg(2+) site.

It belongs to the P-Pant transferase superfamily. AcpS family. It depends on Mg(2+) as a cofactor.

Its subcellular location is the cytoplasm. The catalysed reaction is apo-[ACP] + CoA = holo-[ACP] + adenosine 3',5'-bisphosphate + H(+). Functionally, transfers the 4'-phosphopantetheine moiety from coenzyme A to a Ser of acyl-carrier-protein. The chain is Holo-[acyl-carrier-protein] synthase from Aromatoleum aromaticum (strain DSM 19018 / LMG 30748 / EbN1) (Azoarcus sp. (strain EbN1)).